We begin with the raw amino-acid sequence, 268 residues long: Shikimate kinase (268 aa).

An ATP-binding site is contributed by proline 70–alanine 80.

It belongs to the GHMP kinase family. Archaeal shikimate kinase subfamily.

It localises to the cytoplasm. The catalysed reaction is shikimate + ATP = 3-phosphoshikimate + ADP + H(+). The protein operates within metabolic intermediate biosynthesis; chorismate biosynthesis; chorismate from D-erythrose 4-phosphate and phosphoenolpyruvate: step 5/7. This Thermoplasma acidophilum (strain ATCC 25905 / DSM 1728 / JCM 9062 / NBRC 15155 / AMRC-C165) protein is Shikimate kinase (aroK).